A 292-amino-acid polypeptide reads, in one-letter code: F-box only protein 16 (292 aa).

The 47-residue stretch at 86–132 (LDFTTKLPRVLSLYIFSFLDPRSLCRCAQVCWHWKNLAELDQLWMLK) folds into the F-box domain. 2 disordered regions span residues 188–224 (SPEE…SSDK) and 238–292 (RDPM…PLCP). The segment covering 194–204 (SPLSAFRSSSS) has biased composition (low complexity). Basic and acidic residues predominate over residues 260-273 (RQSHDKKNKLQDRT).

Part of a SCF (SKP1-cullin-F-box) protein ligase complex. In terms of tissue distribution, expressed in heart, spleen and colon.

In terms of biological role, probably recognizes and binds to some phosphorylated proteins and promotes their ubiquitination and degradation. In Homo sapiens (Human), this protein is F-box only protein 16 (FBXO16).